A 37-amino-acid chain; its full sequence is Large ribosomal subunit protein bL36c (37 aa).

It belongs to the bacterial ribosomal protein bL36 family.

The protein resides in the plastid. In Aneura mirabilis (Parasitic liverwort), this protein is Large ribosomal subunit protein bL36c.